The following is a 112-amino-acid chain: Iron-sulfur cluster assembly protein CyaY (112 aa).

It belongs to the frataxin family.

Involved in iron-sulfur (Fe-S) cluster assembly. May act as a regulator of Fe-S biogenesis. This chain is Iron-sulfur cluster assembly protein CyaY, found in Delftia acidovorans (strain DSM 14801 / SPH-1).